The sequence spans 459 residues: Bifunctional protein GlmU (459 aa).

The segment at 1–229 (MSNFAIILAA…FDESLGVNDR (229 aa)) is pyrophosphorylase. Residues 8-11 (LAAG), K22, Q72, and 77-78 (GT) contribute to the UDP-N-acetyl-alpha-D-glucosamine site. D102 contacts Mg(2+). UDP-N-acetyl-alpha-D-glucosamine contacts are provided by G139, E154, N169, and N227. Residue N227 coordinates Mg(2+). The linker stretch occupies residues 230 to 250 (VALATAESVMRRRINHKHMVN). Residues 251-459 (GVSFVNPEAT…TRLPHHPKNQ (209 aa)) are N-acetyltransferase. UDP-N-acetyl-alpha-D-glucosamine contacts are provided by R332 and K350. H362 serves as the catalytic Proton acceptor. UDP-N-acetyl-alpha-D-glucosamine contacts are provided by Y365 and N376. Acetyl-CoA-binding positions include A379, 385–386 (NY), S404, A422, and R439.

The protein in the N-terminal section; belongs to the N-acetylglucosamine-1-phosphate uridyltransferase family. This sequence in the C-terminal section; belongs to the transferase hexapeptide repeat family. As to quaternary structure, homotrimer. Mg(2+) is required as a cofactor.

The protein resides in the cytoplasm. It carries out the reaction alpha-D-glucosamine 1-phosphate + acetyl-CoA = N-acetyl-alpha-D-glucosamine 1-phosphate + CoA + H(+). The enzyme catalyses N-acetyl-alpha-D-glucosamine 1-phosphate + UTP + H(+) = UDP-N-acetyl-alpha-D-glucosamine + diphosphate. The protein operates within nucleotide-sugar biosynthesis; UDP-N-acetyl-alpha-D-glucosamine biosynthesis; N-acetyl-alpha-D-glucosamine 1-phosphate from alpha-D-glucosamine 6-phosphate (route II): step 2/2. It functions in the pathway nucleotide-sugar biosynthesis; UDP-N-acetyl-alpha-D-glucosamine biosynthesis; UDP-N-acetyl-alpha-D-glucosamine from N-acetyl-alpha-D-glucosamine 1-phosphate: step 1/1. Its pathway is bacterial outer membrane biogenesis; LPS lipid A biosynthesis. Its function is as follows. Catalyzes the last two sequential reactions in the de novo biosynthetic pathway for UDP-N-acetylglucosamine (UDP-GlcNAc). The C-terminal domain catalyzes the transfer of acetyl group from acetyl coenzyme A to glucosamine-1-phosphate (GlcN-1-P) to produce N-acetylglucosamine-1-phosphate (GlcNAc-1-P), which is converted into UDP-GlcNAc by the transfer of uridine 5-monophosphate (from uridine 5-triphosphate), a reaction catalyzed by the N-terminal domain. In Streptococcus pneumoniae (strain Taiwan19F-14), this protein is Bifunctional protein GlmU.